Consider the following 471-residue polypeptide: Pneumolysin (471 aa).

The next 4 membrane-spanning stretches (beta stranded) occupy residues 158 to 171 (MEQLKVKFGSDFEK), 178 to 187 (IDFNSVHSGE), 256 to 265 (SDEVEAAFEA), and 273 to 285 (APQTEWKQILDNT). Residues 427 to 437 (ECTGLAWEWWR) carry the Conserved undecapeptide motif. The short motif at 459–460 (TL) is the Cholesterol binding element.

It belongs to the cholesterol-dependent cytolysin family. In terms of assembly, elongated monomers align along their lengths, indicating intersubunit contacts and suggesting the prepore structure. Modeling based on cryo-EM shows a homooligomeric pore complex containing 38-44 subunits; when inserted in the host membrane. The size of isolated pores is detergent-dependent; in amphipol A8-35 homogenous rings form with 42 subunits.

It is found in the secreted. Its subcellular location is the host cell membrane. With respect to regulation, erythrocytes hemolysis is inhibited by cholesterol. Its function is as follows. A cholesterol-dependent toxin that causes cytolysis by forming pores in cholesterol-containing host membranes. After binding to target membranes, the protein undergoes a major conformation change, leading to its insertion in the host membrane and formation of an oligomeric pore complex. Cholesterol is required for binding to host membranes, membrane insertion and pore formation; cholesterol binding is mediated by a Thr-Leu pair in the C-terminus. Can be reversibly inactivated by oxidation. The protein is Pneumolysin (ply) of Streptococcus pneumoniae serotype 2 (strain D39 / NCTC 7466).